The primary structure comprises 323 residues: Sphingolipid delta(4)-desaturase/C4-monooxygenase DES2 (323 aa).

Glycine 2 is lipidated: N-myristoyl glycine. Transmembrane regions (helical) follow at residues 45–65 (WAVL…RGLA) and 68–88 (WLLF…TLAI). A Histidine box-1 motif is present at residues 89–93 (HDISH). The tract at residues 95-99 (AAFGT) is required for C4-hydroxylase activity. Residues 128 to 132 (HVDHH) carry the Histidine box-2 motif. Residues 210–231 (VYLLASSFLGLGLHPISGHFVA) form a helical membrane-spanning segment. The Histidine box-3 motif lies at 259–263 (HVEHH).

Belongs to the fatty acid desaturase type 1 family. DEGS subfamily. In terms of tissue distribution, highly expressed in skin, intestine and kidney.

It localises to the endoplasmic reticulum membrane. The enzyme catalyses a dihydroceramide + 2 Fe(II)-[cytochrome b5] + O2 + 2 H(+) = a phytoceramide + 2 Fe(III)-[cytochrome b5] + H2O. It catalyses the reaction an N-acylsphinganine + 2 Fe(II)-[cytochrome b5] + O2 + 2 H(+) = an N-acylsphing-4-enine + 2 Fe(III)-[cytochrome b5] + 2 H2O. It carries out the reaction N-octanoylsphinganine + 2 Fe(II)-[cytochrome b5] + O2 + 2 H(+) = N-octanoyl-4-hydroxysphinganine + 2 Fe(III)-[cytochrome b5] + H2O. The catalysed reaction is an N-acylsphinganine + 2 Fe(II)-[cytochrome b5] + O2 + 2 H(+) = an N-acyl-(4R)-4-hydroxysphinganine + 2 Fe(III)-[cytochrome b5] + H2O. It functions in the pathway membrane lipid metabolism; sphingolipid biosynthesis. In terms of biological role, bifunctional enzyme which acts both as a sphingolipid delta(4)-desaturase and a sphingolipid C4-monooxygenase. This chain is Sphingolipid delta(4)-desaturase/C4-monooxygenase DES2, found in Homo sapiens (Human).